The chain runs to 350 residues: ALA-interacting subunit 5 (350 aa).

Residues 1–23 (MSSTAASSTVGGGGSSEISGVKK) form a disordered region. Ser2 is subject to N-acetylserine. Residues 50 to 70 (VILTFLVAGVVFIPLGVICLF) form a helical membrane-spanning segment. N-linked (GlcNAc...) asparagine glycosylation is found at Asn181 and Asn231. The helical transmembrane segment at 304–324 (FLGIAYLTVGSICLFLAVTFA) threads the bilayer.

The protein belongs to the CDC50/LEM3 family. Interacts with ALA2 and ALA3 in a heterologous system. As to expression, expressed in roots, leaves, stems, flowers and siliques.

It localises to the golgi apparatus membrane. Its subcellular location is the prevacuolar compartment membrane. The protein resides in the endoplasmic reticulum membrane. Required for the lipid transport activity of the ALA/ALIS P4-ATPase complex. This is ALA-interacting subunit 5 (ALIS5) from Arabidopsis thaliana (Mouse-ear cress).